Consider the following 671-residue polypeptide: DNA ligase (671 aa).

NAD(+) is bound by residues 32–36, 81–82, and glutamate 113; these read DAEYD and SL. Lysine 115 functions as the N6-AMP-lysine intermediate in the catalytic mechanism. NAD(+) contacts are provided by arginine 136, glutamate 173, lysine 290, and lysine 314. Zn(2+) contacts are provided by cysteine 408, cysteine 411, cysteine 426, and cysteine 432. Residues 593-671 enclose the BRCT domain; it reads EIDSPFAGKT…ETEMLRLLGS (79 aa).

Belongs to the NAD-dependent DNA ligase family. LigA subfamily. Mg(2+) is required as a cofactor. Mn(2+) serves as cofactor.

The catalysed reaction is NAD(+) + (deoxyribonucleotide)n-3'-hydroxyl + 5'-phospho-(deoxyribonucleotide)m = (deoxyribonucleotide)n+m + AMP + beta-nicotinamide D-nucleotide.. DNA ligase that catalyzes the formation of phosphodiester linkages between 5'-phosphoryl and 3'-hydroxyl groups in double-stranded DNA using NAD as a coenzyme and as the energy source for the reaction. It is essential for DNA replication and repair of damaged DNA. The polypeptide is DNA ligase (Escherichia coli O1:K1 / APEC).